Reading from the N-terminus, the 284-residue chain is MVLDLLKSGVLLAVLASFTFSVMNALVKEASATLPAAEIVFFRSAIGTLLIYLLMRQAGVALSRQGVPMLLVRGVMGALYLVCYFYAIAHIPLADASILAHMSPFFVILFSALFLGERIPRAVYWLLLVVVLGALMIVKPFSYSSYSVYAVVGLLSAVFAAGASVAIRQLSARHHTYEIVFYFLAVATLVAIPLMWSDFVVPATLREWGLLLAIGVVSLLGQVFLTRAFSHESATIVAVTRYIGIVFNAGWGWLFWSEVPDALTIAGGVLIVVACIALSRTKKG.

Helical transmembrane passes span 2-22 (VLDLLKSGVLLAVLASFTFSV), 34-54 (LPAAEIVFFRSAIGTLLIYLL), 74-94 (GVMGALYLVCYFYAIAHIPLA), 96-116 (ASILAHMSPFFVILFSALFLG), 122-142 (AVYWLLLVVVLGALMIVKPFS), 147-167 (SVYAVVGLLSAVFAAGASVAI), 179-199 (IVFYFLAVATLVAIPLMWSDF), 209-229 (GLLLAIGVVSLLGQVFLTRAF), 236-256 (IVAVTRYIGIVFNAGWGWLFW), and 259-279 (VPDALTIAGGVLIVVACIALS). EamA domains lie at 8 to 138 (SGVL…LMIV) and 151 to 279 (VVGL…IALS).

Belongs to the EamA transporter family.

The protein resides in the cell inner membrane. Its function is as follows. Transports the metallophore pseudopaline, which is involved in the acquisition of nickel and zinc, and thus enables bacterial growth inside the host, where metal access is limited. Is probably involved in the export of pseudopaline. This is Pseudopaline exporter CntI from Pseudomonas aeruginosa (strain UCBPP-PA14).